Consider the following 270-residue polypeptide: DNA packaging protein OPG160 (270 aa).

25-32 (GGSGSGKT) lines the ATP pocket.

It belongs to the orthopoxvirus OPG160 protein family. In terms of assembly, interacts with protein OPG137.

In terms of biological role, participates in viral DNA packaging and virion morphogenesis. The sequence is that of DNA packaging protein OPG160 (OPG160) from Variola virus (isolate Human/India/Ind3/1967) (VARV).